The following is a 320-amino-acid chain: 4-hydroxythreonine-4-phosphate dehydrogenase (320 aa).

Substrate is bound at residue threonine 132. A divalent metal cation-binding residues include histidine 161, histidine 205, and histidine 258. Substrate contacts are provided by lysine 266, asparagine 275, and arginine 284.

It belongs to the PdxA family. As to quaternary structure, homodimer. The cofactor is a divalent metal cation.

It is found in the cytoplasm. It catalyses the reaction 4-(phosphooxy)-L-threonine + NAD(+) = 3-amino-2-oxopropyl phosphate + CO2 + NADH. The protein operates within cofactor biosynthesis; pyridoxine 5'-phosphate biosynthesis; pyridoxine 5'-phosphate from D-erythrose 4-phosphate: step 4/5. Functionally, catalyzes the NAD(P)-dependent oxidation of 4-(phosphooxy)-L-threonine (HTP) into 2-amino-3-oxo-4-(phosphooxy)butyric acid which spontaneously decarboxylates to form 3-amino-2-oxopropyl phosphate (AHAP). This chain is 4-hydroxythreonine-4-phosphate dehydrogenase, found in Aquifex aeolicus (strain VF5).